The chain runs to 666 residues: MKVNTLPLAAITGQEAVKLALTLAAVDPGLKGVAIAGRRGTGKTVLARGLRHLLPPIDQLEGCPCHCNPAEPHSWCNRCRERFTEESGLSDSEVPVVQRNAPFSEVPLGATEDRLLGAIDVEQSLAGGVRAWQPGLLGEANRGVLYIDQLNLLDDGLVNSLFDAMSGTCRLEREGISVQYPSNFVLIGTYDPDEGGLRGHLADRIAMHVSSGVIVDLEQRLEIMRRQELFSEAPEDFFDLYNDEQEQTLRRIEKARTVLPQVTISEAQTLYLIGQSLKRGVPGHRADLFSVRLAKAHAAWQGRTAVEPIDLAVAVEFVIKPRQTVDLPDEEEQMQPPPPPPPPPPPPEPDKPDDPETPPDEAPKDEQTLQLPEEFFFDAEEVPMEDELLSLQNKVQRQARGGAHGKQKSLERGRYARALLPPPGKNSRVAVDATLRAAAPYQRQRRESGQYGDRQVIVTNSDIRAKQFVRKSGALIIFVVDASGSMAFNRMSSAKGAVSVLLNEAYVNRDKVALIIFRGQQAETLVPPTRSVELAKKRFDQVPVGGGSPLAGAIAQAIEVGVNSIGSDVGQVIITLITDGRGNVPMDPQAGPKNREQLNEEILALSRLVPENGFSMLVIDTANKFTSTGFAKKIADAAFAQYYYLPKMTAASLAETVKSGVHALRK.

37–44 (GRRGTGKT) lines the ATP pocket. Residues 327–367 (LPDEEEQMQPPPPPPPPPPPPEPDKPDDPETPPDEAPKDEQ) are disordered. Pro residues predominate over residues 335 to 347 (QPPPPPPPPPPPP). The 187-residue stretch at 475-661 (LIIFVVDASG…SLAETVKSGV (187 aa)) folds into the VWFA domain.

It belongs to the Mg-chelatase subunits D/I family.

The enzyme catalyses protoporphyrin IX + Mg(2+) + ATP + H2O = Mg-protoporphyrin IX + ADP + phosphate + 3 H(+). It participates in porphyrin-containing compound metabolism; bacteriochlorophyll biosynthesis. Its function is as follows. Involved in bacteriochlorophyll biosynthesis; introduces a magnesium ion into protoporphyrin IX to yield Mg-protoporphyrin IX. This Heliobacterium mobile (Heliobacillus mobilis) protein is Magnesium-chelatase 67 kDa subunit (bchD).